The chain runs to 329 residues: Acetyl-coenzyme A carboxylase carboxyl transferase subunit alpha (329 aa).

Residues 40 to 294 form the CoA carboxyltransferase C-terminal domain; that stretch reads QLETLAARRR…REAIERHLDE (255 aa).

This sequence belongs to the AccA family. As to quaternary structure, acetyl-CoA carboxylase is a heterohexamer composed of biotin carboxyl carrier protein (AccB), biotin carboxylase (AccC) and two subunits each of ACCase subunit alpha (AccA) and ACCase subunit beta (AccD).

The protein resides in the cytoplasm. The enzyme catalyses N(6)-carboxybiotinyl-L-lysyl-[protein] + acetyl-CoA = N(6)-biotinyl-L-lysyl-[protein] + malonyl-CoA. Its pathway is lipid metabolism; malonyl-CoA biosynthesis; malonyl-CoA from acetyl-CoA: step 1/1. Component of the acetyl coenzyme A carboxylase (ACC) complex. First, biotin carboxylase catalyzes the carboxylation of biotin on its carrier protein (BCCP) and then the CO(2) group is transferred by the carboxyltransferase to acetyl-CoA to form malonyl-CoA. The chain is Acetyl-coenzyme A carboxylase carboxyl transferase subunit alpha from Prochlorococcus marinus (strain MIT 9313).